Here is a 475-residue protein sequence, read N- to C-terminus: SAM50-like protein SPAC17C9.06 (475 aa).

Residues Val44–Lys130 form the POTRA domain.

The protein belongs to the SAM50/omp85 family. As to quaternary structure, associates with the mitochondrial contact site and cristae organizing system (MICOS) complex (also known as MINOS or MitOS complex).

It localises to the mitochondrion outer membrane. May be required for the assembly pathway of mitochondrial outer membrane proteins. The polypeptide is SAM50-like protein SPAC17C9.06 (Schizosaccharomyces pombe (strain 972 / ATCC 24843) (Fission yeast)).